The chain runs to 201 residues: dTTP/UTP pyrophosphatase (201 aa).

The active-site Proton acceptor is the Asp80.

Belongs to the Maf family. YhdE subfamily. A divalent metal cation is required as a cofactor.

The protein localises to the cytoplasm. It catalyses the reaction dTTP + H2O = dTMP + diphosphate + H(+). The enzyme catalyses UTP + H2O = UMP + diphosphate + H(+). Nucleoside triphosphate pyrophosphatase that hydrolyzes dTTP and UTP. May have a dual role in cell division arrest and in preventing the incorporation of modified nucleotides into cellular nucleic acids. The chain is dTTP/UTP pyrophosphatase from Novosphingobium aromaticivorans (strain ATCC 700278 / DSM 12444 / CCUG 56034 / CIP 105152 / NBRC 16084 / F199).